The sequence spans 92 residues: C-C motif chemokine 3 (92 aa).

An N-terminal signal peptide occupies residues Met-1–Ser-23. Disulfide bonds link Cys-34/Cys-57 and Cys-35/Cys-73.

This sequence belongs to the intercrine beta (chemokine CC) family. In terms of assembly, self-associates. Also heterodimer of MIP-1-alpha(4-69) and MIP-1-beta(3-69). Interacts with CCR1.

It localises to the secreted. In terms of biological role, monokine with inflammatory and chemokinetic properties. Binds to CCR1, CCR4 and CCR5. One of the major HIV-suppressive factors produced by CD8+ T-cells. Recombinant MIP-1-alpha induces a dose-dependent inhibition of different strains of HIV-1, HIV-2, and simian immunodeficiency virus (SIV). The chain is C-C motif chemokine 3 (Ccl3) from Rattus norvegicus (Rat).